Here is a 334-residue protein sequence, read N- to C-terminus: 2,3-bisphosphoglycerate-dependent phosphoglycerate mutase 1 (334 aa).

Residues 1–48 (MATATSHQSVVSFASLRSSPSSTISQCGFKIDSSLSFTSKKTNFCKIK) constitute a chloroplast transit peptide. Residues 84 to 91 (RHGESLWN), 97 to 98 (TG), R134, 188 to 191 (ERMY), K199, 215 to 216 (RR), and 259 to 260 (GN) each bind substrate. H85 functions as the Tele-phosphohistidine intermediate in the catalytic mechanism. Residue E188 is the Proton donor/acceptor of the active site.

Belongs to the phosphoglycerate mutase family. BPG-dependent PGAM subfamily.

The protein localises to the plastid. The protein resides in the chloroplast. The enzyme catalyses (2R)-2-phosphoglycerate = (2R)-3-phosphoglycerate. It participates in carbohydrate degradation; glycolysis; pyruvate from D-glyceraldehyde 3-phosphate: step 3/5. Functionally, catalyzes the interconversion of 2-phosphoglycerate and 3-phosphoglycerate. The chain is 2,3-bisphosphoglycerate-dependent phosphoglycerate mutase 1 from Arabidopsis thaliana (Mouse-ear cress).